A 447-amino-acid polypeptide reads, in one-letter code: Chitobiosyldiphosphodolichol beta-mannosyltransferase (447 aa).

The Lumenal segment spans residues 1–8; the sequence is MSVFGFDN. Residues 9–29 traverse the membrane as a helical segment; that stretch reads IPTWLWWLLAIYLATPFVLYV. The Cytoplasmic portion of the chain corresponds to 30 to 127; that stretch reads VQPYLFYEGK…LCSMFWKLRA (98 aa). The segment at residues 128–148 is an intramembrane region (helical); the sequence is VDYILLQNPPTIPILPIAVVV. At 149-447 the chain is on the lumenal side; it reads KTFSRAKLII…ALSELKIIHK (299 aa).

Belongs to the glycosyltransferase group 1 family.

It localises to the endoplasmic reticulum membrane. The catalysed reaction is an N,N'-diacetylchitobiosyl-diphospho-di-trans,poly-cis-dolichol + GDP-alpha-D-mannose = a beta-D-Man-(1-&gt;4)-beta-D-GlcNAc-(1-&gt;4)-alpha-D-GlcNAc-diphospho-di-trans,poly-cis-dolichol + GDP + H(+). The protein operates within protein modification; protein glycosylation. Its function is as follows. Participates in the formation of the lipid-linked precursor oligosaccharide for N-glycosylation. Involved in assembling the dolichol-pyrophosphate-GlcNAc(2)-Man(5) intermediate on the cytoplasmic surface of the ER. The sequence is that of Chitobiosyldiphosphodolichol beta-mannosyltransferase (ALG1) from Kluyveromyces lactis (strain ATCC 8585 / CBS 2359 / DSM 70799 / NBRC 1267 / NRRL Y-1140 / WM37) (Yeast).